A 648-amino-acid polypeptide reads, in one-letter code: Replication restart protein PriA (648 aa).

The region spanning 131–297 (TILNESNKPT…EIGKYQLVTL (167 aa)) is the Helicase ATP-binding domain. 144–151 (GVTGSGKT) is a binding site for ATP. Residues 240–243 (DEEH) carry the DEAH box motif. Zn(2+)-binding residues include Cys358, Cys361, Cys367, Cys370, Cys385, Cys388, Cys398, and Cys401. Positions 393-548 (KIFSSCPECL…SFFANELEIR (156 aa)) constitute a Helicase C-terminal domain.

This sequence belongs to the helicase family. PriA subfamily. As to quaternary structure, component of the replication restart primosome. The cofactor is Zn(2+).

It catalyses the reaction Couples ATP hydrolysis with the unwinding of duplex DNA by translocating in the 3'-5' direction.. It carries out the reaction ATP + H2O = ADP + phosphate + H(+). Initiates the restart of stalled replication forks, which reloads the replicative helicase on sites other than the origin of replication. Recognizes and binds to abandoned replication forks and remodels them to uncover a helicase loading site. Promotes assembly of the primosome at these replication forks. The protein is Replication restart protein PriA of Rickettsia conorii (strain ATCC VR-613 / Malish 7).